The primary structure comprises 356 residues: Chorismate synthase (356 aa).

An NADP(+)-binding site is contributed by Arg-46. Residues Arg-122–Ser-124, Asn-234–Gly-235, Gly-274, Lys-289–Ser-293, and Arg-315 contribute to the FMN site.

It belongs to the chorismate synthase family. As to quaternary structure, homotetramer. FMNH2 serves as cofactor.

It carries out the reaction 5-O-(1-carboxyvinyl)-3-phosphoshikimate = chorismate + phosphate. It functions in the pathway metabolic intermediate biosynthesis; chorismate biosynthesis; chorismate from D-erythrose 4-phosphate and phosphoenolpyruvate: step 7/7. Functionally, catalyzes the anti-1,4-elimination of the C-3 phosphate and the C-6 proR hydrogen from 5-enolpyruvylshikimate-3-phosphate (EPSP) to yield chorismate, which is the branch point compound that serves as the starting substrate for the three terminal pathways of aromatic amino acid biosynthesis. This reaction introduces a second double bond into the aromatic ring system. This Campylobacter fetus subsp. fetus (strain 82-40) protein is Chorismate synthase.